The primary structure comprises 300 residues: Virginiamycin B lyase (300 aa).

Substrate is bound at residue His-231. Position 270 (Glu-270) interacts with Mg(2+). The active-site Proton acceptor is His-272. Glu-287 is a Mg(2+) binding site.

It belongs to the Vgb family. In terms of assembly, monomer. Mg(2+) serves as cofactor.

Functionally, inactivates the type B streptogramin antibiotics by linearizing the lactone ring at the ester linkage, generating a free phenylglycine carboxylate and converting the threonyl moiety into 2-amino-butenoic acid. The chain is Virginiamycin B lyase from Saccharopolyspora erythraea (strain ATCC 11635 / DSM 40517 / JCM 4748 / NBRC 13426 / NCIMB 8594 / NRRL 2338).